The primary structure comprises 57 residues: Protein translocase subunit SecE (57 aa).

Residues 33–53 (GLGILLVGFIGFVIFSIMTFV) traverse the membrane as a helical segment.

Belongs to the SecE/SEC61-gamma family. In terms of assembly, component of the Sec protein translocase complex. Heterotrimer consisting of SecY (alpha), SecG (beta) and SecE (gamma) subunits. The heterotrimers can form oligomers, although 1 heterotrimer is thought to be able to translocate proteins. Interacts with the ribosome. May interact with SecDF, and other proteins may be involved.

The protein localises to the cell membrane. Essential subunit of the Sec protein translocation channel SecYEG. Clamps together the 2 halves of SecY. May contact the channel plug during translocation. The polypeptide is Protein translocase subunit SecE (Natronomonas pharaonis (strain ATCC 35678 / DSM 2160 / CIP 103997 / JCM 8858 / NBRC 14720 / NCIMB 2260 / Gabara) (Halobacterium pharaonis)).